Consider the following 254-residue polypeptide: Leucyl/phenylalanyl-tRNA--protein transferase (254 aa).

It belongs to the L/F-transferase family.

It localises to the cytoplasm. The enzyme catalyses N-terminal L-lysyl-[protein] + L-leucyl-tRNA(Leu) = N-terminal L-leucyl-L-lysyl-[protein] + tRNA(Leu) + H(+). The catalysed reaction is N-terminal L-arginyl-[protein] + L-leucyl-tRNA(Leu) = N-terminal L-leucyl-L-arginyl-[protein] + tRNA(Leu) + H(+). It carries out the reaction L-phenylalanyl-tRNA(Phe) + an N-terminal L-alpha-aminoacyl-[protein] = an N-terminal L-phenylalanyl-L-alpha-aminoacyl-[protein] + tRNA(Phe). Its function is as follows. Functions in the N-end rule pathway of protein degradation where it conjugates Leu, Phe and, less efficiently, Met from aminoacyl-tRNAs to the N-termini of proteins containing an N-terminal arginine or lysine. The protein is Leucyl/phenylalanyl-tRNA--protein transferase of Burkholderia ambifaria (strain MC40-6).